We begin with the raw amino-acid sequence, 499 residues long: Glutamate--tRNA ligase (499 aa).

Residues 12–22 carry the 'HIGH' region motif; it reads PSPTGHLHIGN. Positions 259-263 match the 'KMSKS' region motif; sequence KLSKR. Residue lysine 262 participates in ATP binding.

It belongs to the class-I aminoacyl-tRNA synthetase family. Glutamate--tRNA ligase type 1 subfamily. Monomer.

It is found in the cytoplasm. The catalysed reaction is tRNA(Glu) + L-glutamate + ATP = L-glutamyl-tRNA(Glu) + AMP + diphosphate. Catalyzes the attachment of glutamate to tRNA(Glu) in a two-step reaction: glutamate is first activated by ATP to form Glu-AMP and then transferred to the acceptor end of tRNA(Glu). In Lactobacillus johnsonii (strain CNCM I-12250 / La1 / NCC 533), this protein is Glutamate--tRNA ligase.